The sequence spans 344 residues: tRNA N6-adenosine threonylcarbamoyltransferase (344 aa).

Fe cation contacts are provided by His-111 and His-115. Residues 134–138, Asp-167, Gly-180, Asp-184, and Asn-277 each bind substrate; that span reads LVSGG. Asp-305 is a binding site for Fe cation.

This sequence belongs to the KAE1 / TsaD family. It depends on Fe(2+) as a cofactor.

It localises to the cytoplasm. It catalyses the reaction L-threonylcarbamoyladenylate + adenosine(37) in tRNA = N(6)-L-threonylcarbamoyladenosine(37) in tRNA + AMP + H(+). Functionally, required for the formation of a threonylcarbamoyl group on adenosine at position 37 (t(6)A37) in tRNAs that read codons beginning with adenine. Is involved in the transfer of the threonylcarbamoyl moiety of threonylcarbamoyl-AMP (TC-AMP) to the N6 group of A37, together with TsaE and TsaB. TsaD likely plays a direct catalytic role in this reaction. This Microcystis aeruginosa (strain NIES-843 / IAM M-2473) protein is tRNA N6-adenosine threonylcarbamoyltransferase.